The chain runs to 236 residues: Peptidase E (236 aa).

Active-site charge relay system residues include S122, D137, and H159.

The protein belongs to the peptidase S51 family.

Its subcellular location is the cytoplasm. The catalysed reaction is Dipeptidase E catalyzes the hydrolysis of dipeptides Asp-|-Xaa. It does not act on peptides with N-terminal Glu, Asn or Gln, nor does it cleave isoaspartyl peptides.. Its function is as follows. Hydrolyzes dipeptides containing N-terminal aspartate residues. May play a role in allowing the cell to use peptide aspartate to spare carbon otherwise required for the synthesis of the aspartate family of amino acids. The chain is Peptidase E from Shewanella sp. (strain ANA-3).